Reading from the N-terminus, the 263-residue chain is Protein PUN1 (263 aa).

Topologically, residues 1 to 6 (MRNFFT) are cytoplasmic. A helical transmembrane segment spans residues 7-27 (LFFAAIFSLGALILAIVACAG). Residues 28 to 143 (STKNYSPINK…MTYYNNLVKC (116 aa)) lie on the Extracellular side of the membrane. N100 is a glycosylation site (N-linked (GlcNAc...) asparagine). The helical transmembrane segment at 144–164 (MFITILIGIVLTFVNLVFNVL) threads the bilayer. Residues 165 to 172 (RWIIHIRP) lie on the Cytoplasmic side of the membrane. The chain crosses the membrane as a helical span at residues 173 to 193 (LTWFGAFFSFFAFAALLVSIG). Topologically, residues 194–223 (SCLGTYSYIKYILKHNYSDYGISMSIGRNY) are extracellular. A glycan (N-linked (GlcNAc...) asparagine) is linked at N209. A helical membrane pass occupies residues 224–244 (QGLMWGAVVGALLNFILWCSV). Topologically, residues 245-263 (RSRPTVIYANAPIEEKPLI) are cytoplasmic. K260 participates in a covalent cross-link: Glycyl lysine isopeptide (Lys-Gly) (interchain with G-Cter in ubiquitin).

Belongs to the SUR7 family. Post-translationally, N-glycosylated.

The protein localises to the cell membrane. Functionally, contributes to the wild-type cellular response to nitrogen stress through signaling pathways that regulate the expression of genes involved in amino acid biosynthesis. Required for wild-type filamentous growth, cell growth, and cell-cell adhesion. This chain is Protein PUN1 (PUN1), found in Saccharomyces cerevisiae (strain ATCC 204508 / S288c) (Baker's yeast).